Here is a 529-residue protein sequence, read N- to C-terminus: ATP synthase subunit alpha (529 aa).

173–180 (GDRQTGKT) contacts ATP.

Belongs to the ATPase alpha/beta chains family. In terms of assembly, F-type ATPases have 2 components, CF(1) - the catalytic core - and CF(0) - the membrane proton channel. CF(1) has five subunits: alpha(3), beta(3), gamma(1), delta(1), epsilon(1). CF(0) has three main subunits: a(1), b(2) and c(9-12). The alpha and beta chains form an alternating ring which encloses part of the gamma chain. CF(1) is attached to CF(0) by a central stalk formed by the gamma and epsilon chains, while a peripheral stalk is formed by the delta and b chains.

The protein localises to the cell membrane. It carries out the reaction ATP + H2O + 4 H(+)(in) = ADP + phosphate + 5 H(+)(out). Functionally, produces ATP from ADP in the presence of a proton gradient across the membrane. The alpha chain is a regulatory subunit. The chain is ATP synthase subunit alpha from Streptomyces lividans.